We begin with the raw amino-acid sequence, 500 residues long: Cytochrome P450 71B9 (500 aa).

A helical transmembrane segment spans residues 1-21 (MATIWFLSLLFLCCILLAAFK). Cys-440 is a heme binding site.

This sequence belongs to the cytochrome P450 family. Heme is required as a cofactor.

Its subcellular location is the membrane. The polypeptide is Cytochrome P450 71B9 (CYP71B9) (Arabidopsis thaliana (Mouse-ear cress)).